Reading from the N-terminus, the 711-residue chain is DNA ligase (711 aa).

A disordered region spans residues 1–21 (MNATHRGAQADASAPAGGLPP). Over residues 10 to 21 (ADASAPAGGLPP) the composition is skewed to low complexity. Residues 52–56 (DAEYD), 101–102 (SL), and glutamate 146 each bind NAD(+). The N6-AMP-lysine intermediate role is filled by lysine 148. NAD(+)-binding residues include arginine 169, glutamate 205, lysine 322, and lysine 346. Residues cysteine 440, cysteine 443, cysteine 458, and cysteine 464 each contribute to the Zn(2+) site. The 89-residue stretch at 623-711 (RAPAPLAGKT…VGAGQPGEQS (89 aa)) folds into the BRCT domain.

This sequence belongs to the NAD-dependent DNA ligase family. LigA subfamily. Mg(2+) serves as cofactor. The cofactor is Mn(2+).

The catalysed reaction is NAD(+) + (deoxyribonucleotide)n-3'-hydroxyl + 5'-phospho-(deoxyribonucleotide)m = (deoxyribonucleotide)n+m + AMP + beta-nicotinamide D-nucleotide.. Its function is as follows. DNA ligase that catalyzes the formation of phosphodiester linkages between 5'-phosphoryl and 3'-hydroxyl groups in double-stranded DNA using NAD as a coenzyme and as the energy source for the reaction. It is essential for DNA replication and repair of damaged DNA. In Cupriavidus pinatubonensis (strain JMP 134 / LMG 1197) (Cupriavidus necator (strain JMP 134)), this protein is DNA ligase.